A 263-amino-acid polypeptide reads, in one-letter code: tRNA pseudouridine synthase A (263 aa).

D51 functions as the Nucleophile in the catalytic mechanism. A substrate-binding site is contributed by Y109.

It belongs to the tRNA pseudouridine synthase TruA family. Homodimer.

The catalysed reaction is uridine(38/39/40) in tRNA = pseudouridine(38/39/40) in tRNA. In terms of biological role, formation of pseudouridine at positions 38, 39 and 40 in the anticodon stem and loop of transfer RNAs. In Mannheimia succiniciproducens (strain KCTC 0769BP / MBEL55E), this protein is tRNA pseudouridine synthase A.